The following is a 278-amino-acid chain: Small ribosomal subunit protein uS2 (278 aa).

The disordered stretch occupies residues 233–258; it reads IDMEAAGEAPANKGKKKSAKARLDKS.

The protein belongs to the universal ribosomal protein uS2 family.

The protein is Small ribosomal subunit protein uS2 of Bacteroides fragilis (strain ATCC 25285 / DSM 2151 / CCUG 4856 / JCM 11019 / LMG 10263 / NCTC 9343 / Onslow / VPI 2553 / EN-2).